A 258-amino-acid chain; its full sequence is uncharacterized protein (258 aa).

This is an uncharacterized protein from Bacillus sp. (strain OxB-1).